Consider the following 514-residue polypeptide: GTPase-activating protein gyp1 (514 aa).

Disordered stretches follow at residues Leu-17–Lys-65 and Leu-130–Ser-164. 2 stretches are compositionally biased toward polar residues: residues Trp-18 to Pro-28 and Arg-135 to Arg-158. The region spanning Gly-216–Gly-443 is the Rab-GAP TBC domain.

Its subcellular location is the golgi apparatus. The protein resides in the golgi stack. The protein localises to the cytoplasm. It is found in the nucleus. In terms of biological role, stimulates specifically the GTPase activity of ypt1. Functions on the Golgi as a negative regulator of ypt1. This chain is GTPase-activating protein gyp1, found in Schizosaccharomyces pombe (strain 972 / ATCC 24843) (Fission yeast).